The primary structure comprises 340 residues: Protein RecA (340 aa).

Gly67 to Thr74 lines the ATP pocket.

Belongs to the RecA family.

It is found in the cytoplasm. Can catalyze the hydrolysis of ATP in the presence of single-stranded DNA, the ATP-dependent uptake of single-stranded DNA by duplex DNA, and the ATP-dependent hybridization of homologous single-stranded DNAs. It interacts with LexA causing its activation and leading to its autocatalytic cleavage. The polypeptide is Protein RecA (Mycoplasma genitalium (strain ATCC 33530 / DSM 19775 / NCTC 10195 / G37) (Mycoplasmoides genitalium)).